Reading from the N-terminus, the 613-residue chain is Proton myo-inositol cotransporter hmit-1.2 (613 aa).

Residues 1–21 (MVAVEFKVSESGRPRPEKNPK) are Cytoplasmic-facing. A helical membrane pass occupies residues 22–42 (LGFFVYLLGSAAIIGGFLFGY). Residues 43 to 69 (DTSVVSAAMLYVPEAPGLKPMGTVWKE) are Extracellular-facing. Residues 70–90 (VIVSITPGMAAVGAWFSGAGS) traverse the membrane as a helical segment. Over 91–96 (DRYGRK) the chain is Cytoplasmic. The chain crosses the membrane as a helical span at residues 97–117 (PIIIGSTLIFVCGAVICAVAW). The Extracellular segment spans residues 118 to 119 (TK). The helical transmembrane segment at 120–140 (IVMLIGRIFLGVGIGFASMVV) threads the bilayer. Residues 141–157 (PVYLGEASPTHVRGTLV) lie on the Cytoplasmic side of the membrane. A helical membrane pass occupies residues 158–178 (SAFAMMISFGQVVANIMGGVF). At 179–189 (SYWEPYTIGWR) the chain is on the extracellular side. Residues 190–210 (LMFAFAGIPALIQFVCFIFLP) form a helical membrane-spanning segment. Residues 211-279 (ETPRWLYENG…RILKTPHVLK (69 aa)) are Cytoplasmic-facing. A helical membrane pass occupies residues 280–300 (ACFIGSMLQAFQQLAGINTIL). The Extracellular portion of the chain corresponds to 301-317 (YYTADIIRSAGIENYHT). The helical transmembrane segment at 318–338 (IIWISVILSICNLIGPFAPMF) threads the bilayer. Topologically, residues 339-347 (FIEKLGRRK) are cytoplasmic. The chain crosses the membrane as a helical span at residues 348-368 (LFLFSCAGVVVSLVLIGVSFL). Topologically, residues 369-472 (LVGNDSAPNF…QKHHCTTSYT (104 aa)) are extracellular. Residues N372, N451, and N456 are each glycosylated (N-linked (GlcNAc...) asparagine). The helical transmembrane segment at 473–493 (ILPIVMMGVYLLTFSCGFTSL) threads the bilayer. The Cytoplasmic portion of the chain corresponds to 494–515 (PWVLNSEFYPMWARSTCVSIST). A helical transmembrane segment spans residues 516-536 (LSNWVFNLIIALTYLSLTHAI). Over 537–539 (TKY) the chain is Extracellular. Residues 540–560 (GAFWLYAIFTIIAFIFIYFLV) form a helical membrane-spanning segment. The Cytoplasmic portion of the chain corresponds to 561–613 (PETTGYSIDEVEMLFMNKRQRNIAMQARQAKLDAASDKDKNSSTSLSTETITM). A disordered region spans residues 594-613 (AASDKDKNSSTSLSTETITM). Positions 602–613 (SSTSLSTETITM) are enriched in polar residues.

Belongs to the major facilitator superfamily. Sugar transporter (TC 2.A.1.1) family. Expressed in the excretory canal cell and in pairs of amphid and sheath glia.

It localises to the cell membrane. The protein localises to the perikaryon. It carries out the reaction myo-inositol(out) + H(+)(out) = myo-inositol(in) + H(+)(in). H(+)-myo-inositol cotransporter. Probably by promoting the transport of myo-inositol regulates intracellular osmosis in response to hyperosmotic stress. This Caenorhabditis elegans protein is Proton myo-inositol cotransporter hmit-1.2.